The following is a 695-amino-acid chain: Glycine--tRNA ligase beta subunit (695 aa).

The protein belongs to the class-II aminoacyl-tRNA synthetase family. As to quaternary structure, tetramer of two alpha and two beta subunits.

It localises to the cytoplasm. The enzyme catalyses tRNA(Gly) + glycine + ATP = glycyl-tRNA(Gly) + AMP + diphosphate. The sequence is that of Glycine--tRNA ligase beta subunit from Desulforamulus reducens (strain ATCC BAA-1160 / DSM 100696 / MI-1) (Desulfotomaculum reducens).